Here is a 512-residue protein sequence, read N- to C-terminus: Keratin, type I cytoskeletal 24 (512 aa).

Positions 1-21 (MFCSAQKGSCSSRVSSSGAVG) are disordered. The interval 1–140 (MFCSAQKGSC…GYDGGLLSGS (140 aa)) is head. Positions 8–21 (GSCSSRVSSSGAVG) are enriched in low complexity. A coil 1A region spans residues 141-176 (EKQTMQDLNDRLANYLDKVRALEEANTDLECKIKDW). In terms of domain architecture, IF rod spans 141–455 (EKQTMQDLND…RLLNGDGGGC (315 aa)). The tract at residues 177-197 (YGKHGSVKGGSGRDYSQYYSI) is linker 1. The tract at residues 198-289 (IEDLKKQILS…KNHEEEMKCM (92 aa)) is coil 1B. Residues 290–312 (QGSSGGDVTVEMNAAPGVDLTKL) form a linker 12 region. The interval 313–451 (LNDMRAQYEA…ETYRRLLNGD (139 aa)) is coil 2. The tail stretch occupies residues 452-512 (GGGCDYRNLV…VSNISEVKIK (61 aa)).

The protein belongs to the intermediate filament family. As to quaternary structure, heterotetramer of two type I and two type II keratins.

The chain is Keratin, type I cytoskeletal 24 (Krt24) from Mus musculus (Mouse).